The chain runs to 614 residues: Leucine-rich repeat and immunoglobulin-like domain-containing nogo receptor-interacting protein 1 (614 aa).

The signal sequence occupies residues 1-35; sequence MLAGGVRSMPSPLLACWQPILLLVLGSVLSGSATG. Intrachain disulfides connect cysteine 36/cysteine 42 and cysteine 40/cysteine 51. The LRRNT domain occupies 36-65; it reads CPPRCECSAQDRAVLCHRKRFVAVPEGIPT. The Extracellular segment spans residues 36–555; sequence CPPRCECSAQ…FDIKTLIIAT (520 aa). 11 LRR repeats span residues 66-87, 90-111, 114-135, 138-159, 162-183, 186-207, 210-231, 258-279, 282-303, 306-327, and 330-351; these read ETRL…EFAS, HLEE…AFNN, NLRT…VFTG, NLTK…MFQD, NLKS…AFSG, SLEQ…ALSH, GLIV…SFKR, NLTS…AVRH, YLRF…MLHE, RLQE…AFRG, and YLRV…VFHS. N-linked (GlcNAc...) asparagine glycosylation is present at asparagine 138. The N-linked (GlcNAc...) asparagine glycan is linked to asparagine 196. Asparagine 258, asparagine 268, and asparagine 287 each carry an N-linked (GlcNAc...) asparagine glycan. Asparagine 335 carries N-linked (GlcNAc...) asparagine glycosylation. The LRRCT domain maps to 363 to 417; that stretch reads NPLACDCRLLWVFRRRWRLNFNRQQPTCATPEFVQGKEFKDFPDVLLPNYFTCRR. Cystine bridges form between cysteine 367–cysteine 390, cysteine 369–cysteine 415, and cysteine 440–cysteine 491. The 103-residue stretch at 405–507 folds into the Ig-like C2-type domain; it reads PDVLLPNYFT…GNDSMPAHLH (103 aa). N-linked (GlcNAc...) asparagine glycosylation is found at asparagine 486 and asparagine 536. A helical transmembrane segment spans residues 556–576; sequence TMGFISFLGVVLFCLVLLFLW. At 577–614 the chain is on the cytoplasmic side; sequence SRGKGNTKHNIEIEYVPRKSDAGISSADAPRKFNMKMI. Serine 596 carries the phosphoserine modification.

As to quaternary structure, homotetramer. Forms a ternary complex with RTN4R/NGFR and RTN4R/TNFRSF19. Interacts with NGRF, RTN4R and MYT1L. In terms of processing, N-glycosylated. Contains predominantly high-mannose glycans.

It is found in the cell membrane. Its function is as follows. Functional component of the Nogo receptor signaling complex (RTN4R/NGFR) in RhoA activation responsible for some inhibition of axonal regeneration by myelin-associated factors. Is also an important negative regulator of oligodentrocyte differentiation and axonal myelination. Acts in conjunction with RTN4 and RTN4R in regulating neuronal precursor cell motility during cortical development. In Macaca fascicularis (Crab-eating macaque), this protein is Leucine-rich repeat and immunoglobulin-like domain-containing nogo receptor-interacting protein 1 (LINGO1).